A 165-amino-acid polypeptide reads, in one-letter code: NADPH-dependent 7-cyano-7-deazaguanine reductase (165 aa).

C56 acts as the Thioimide intermediate in catalysis. Catalysis depends on D63, which acts as the Proton donor. Substrate is bound by residues 78–80 (VES) and 97–98 (HE).

It belongs to the GTP cyclohydrolase I family. QueF type 1 subfamily.

Its subcellular location is the cytoplasm. The catalysed reaction is 7-aminomethyl-7-carbaguanine + 2 NADP(+) = 7-cyano-7-deazaguanine + 2 NADPH + 3 H(+). The protein operates within tRNA modification; tRNA-queuosine biosynthesis. Catalyzes the NADPH-dependent reduction of 7-cyano-7-deazaguanine (preQ0) to 7-aminomethyl-7-deazaguanine (preQ1). The protein is NADPH-dependent 7-cyano-7-deazaguanine reductase of Oceanobacillus iheyensis (strain DSM 14371 / CIP 107618 / JCM 11309 / KCTC 3954 / HTE831).